The sequence spans 180 residues: High mobility group protein B1 (180 aa).

Residues 1-8 (VNFSEFSK) carry the Nuclear localization signal (NLS) 1 motif. The segment at residues 1–44 (VNFSEFSKKCSERWKTMSAKEKGKFEDMAKADKARYEREMKTYI) is a DNA-binding region (HMG box 1). At Lys-8 the chain carries N6-acetyllysine. Residues Lys-8 and Lys-9 each participate in an isoglutamyl lysine isopeptide (Lys-Gln) (interchain with Q-?) cross-link. Cys-10 is modified (cysteine sulfonic acid (-SO3H)). An Isoglutamyl lysine isopeptide (Lys-Gln) (interchain with Q-?) cross-link involves residue Lys-33. The tract at residues 45–61 (PPKGETKKKFKDPNAPK) is LPS binding (Lipid A). The cytokine-stimulating activity stretch occupies residues 54–73 (FKDPNAPKRPPSAFFLFCSE). Lys-55 is subject to N6-acetyllysine. Residues 60 to 128 (PKRPPSAFFL…KYEKDIAAYR (69 aa)) constitute a DNA-binding region (HMG box 2). Ser-65 is modified (phosphoserine). Cys-71 is modified (cysteine sulfonic acid (-SO3H)). An N6-acetyllysine mark is found at Lys-92, Lys-93, Lys-106, Lys-137, Lys-138, Lys-142, and Lys-145. The binding to AGER/RAGE stretch occupies residues 115–148 (KLKEKYEKDIAAYRAKGKPDAAKKGVVKAEKSKK). The segment covering 126 to 144 (AYRAKGKPDAAKKGVVKAE) has biased composition (basic and acidic residues). Positions 126–180 (AYRAKGKPDAAKKGVVKAEKSKKKKEEEDDEEDEEDEEEEEEEEDEDEEEDDDDE) are disordered. Positions 143–149 (AEKSKKK) match the Nuclear localization signal (NLS) 2 motif. The tract at residues 143–149 (AEKSKKK) is NLS 2. Lys-145 participates in a covalent cross-link: Isoglutamyl lysine isopeptide (Lys-Gln) (interchain with Q-?). An ADP-ribosylserine modification is found at Ser-146. 4 positions are modified to N6-acetyllysine: Lys-147, Lys-148, Lys-149, and Lys-150. Residues Lys-147, Lys-148, and Lys-149 each participate in an isoglutamyl lysine isopeptide (Lys-Gln) (interchain with Q-?) cross-link. The segment covering 152 to 180 (EEDDEEDEEDEEEEEEEEDEDEEEDDDDE) has biased composition (acidic residues).

The protein belongs to the HMGB family. As to quaternary structure, interacts (fully reduced HMGB1) with CXCL12; probably in a 1:2 ratio involving two molecules of CXCL12, each interacting with one HMG box of HMGB1; inhibited by glycyrrhizin. Associates with the TLR4:LY96 receptor complex. Component of the RAG complex composed of core components RAG1 and RAG2, and associated component HMGB1 or HMGB2. Interacts (in cytoplasm upon starvation) with BECN1; inhibits the interaction of BECN1 and BCL2 leading to promotion of autophagy. Interacts with KPNA1; involved in nuclear import. Interacts with SREBF1, TLR2, TLR4, TLR9, PTPRZ1, APEX1, FEN1, POLB, TERT. Interacts with IL1B, AGER, MSH2, XPA, XPC, HNF1A, TP53. Interacts with CD24; the probable CD24:SIGLEC10 complex is proposed to inhibit HGMB1-mediated tissue damage immune response. Interacts with THBD; prevents HGMB1 interaction with ACER/RAGE and inhibits HGMB1 pro-inflammatory activity. Interacts with HAVCR2; impairs HMGB1 binding to B-DNA and likely HMGB1-mediated innate immune response. Interacts with XPO1; mediating nuclear export. Interacts with receptor RAGE/AGER. Phosphorylated at serine residues. Phosphorylation in both NLS regions is required for cytoplasmic translocation followed by secretion. In terms of processing, acetylated on multiple sites upon stimulation with LPS. Acetylation on lysine residues in the nuclear localization signals (NLS 1 and NLS 2) leads to cytoplasmic localization and subsequent secretion. Post-translationally, reduction/oxidation of cysteine residues and a possible intramolecular disulfide bond give rise to different redox forms with specific functional activities in various cellular compartments: 1- fully reduced HMGB1 (HMGB1C23hC45hC106h), 2-disulfide HMGB1 (HMGB1C23-C45C106h) and 3- sulfonyl HMGB1 (HMGB1C23soC45soC106so). Poly-ADP-ribosylated by PARP1 when secreted following stimulation with LPS. In terms of processing, in vitro cleavage by CASP1 is liberating a HMG box 1-containing peptide which may mediate immunogenic activity; the peptide antagonizes apoptosis-induced immune tolerance. Can be proteolytically cleaved by a thrombin:thrombomodulin complex; reduces binding to heparin and pro-inflammatory activities. Post-translationally, forms covalent cross-links mediated by transglutaminase TGM2, between a glutamine and the epsilon-amino group of a lysine residue, forming homopolymers and heteropolymers.

Its subcellular location is the nucleus. It is found in the chromosome. The protein resides in the cytoplasm. It localises to the secreted. The protein localises to the cell membrane. Its subcellular location is the endosome. It is found in the endoplasmic reticulum-Golgi intermediate compartment. Functionally, multifunctional redox sensitive protein with various roles in different cellular compartments. In the nucleus is one of the major chromatin-associated non-histone proteins and acts as a DNA chaperone involved in replication, transcription, chromatin remodeling, V(D)J recombination, DNA repair and genome stability. Proposed to be an universal biosensor for nucleic acids. Promotes host inflammatory response to sterile and infectious signals and is involved in the coordination and integration of innate and adaptive immune responses. In the cytoplasm functions as a sensor and/or chaperone for immunogenic nucleic acids implicating the activation of TLR9-mediated immune responses, and mediates autophagy. Acts as a danger-associated molecular pattern (DAMP) molecule that amplifies immune responses during tissue injury. Released to the extracellular environment can bind DNA, nucleosomes, IL-1 beta, CXCL12, AGER isoform 2/sRAGE, lipopolysaccharide (LPS) and lipoteichoic acid (LTA), and activates cells through engagement of multiple surface receptors. In the extracellular compartment fully reduced HMGB1 (released by necrosis) acts as a chemokine, disulfide HMGB1 (actively secreted) as a cytokine, and sulfonyl HMGB1 (released from apoptotic cells) promotes immunological tolerance. Has proangiogenic activity. May be involved in platelet activation. Binds to phosphatidylserine and phosphatidylethanolamide. Bound to RAGE mediates signaling for neuronal outgrowth. May play a role in accumulation of expanded polyglutamine (polyQ) proteins. Its function is as follows. Nuclear functions are attributed to fully reduced HGMB1. Associates with chromatin and binds DNA with a preference to non-canonical DNA structures such as single-stranded DNA, DNA-containing cruciforms or bent structures, supercoiled DNA and ZDNA. Can bent DNA and enhance DNA flexibility by looping thus providing a mechanism to promote activities on various gene promoters by enhancing transcription factor binding and/or bringing distant regulatory sequences into close proximity. May be involved in nucleotide excision repair (NER), mismatch repair (MMR) and base excision repair (BER) pathways, and double strand break repair such as non-homologous end joining (NHEJ). Involved in V(D)J recombination by acting as a cofactor of the RAG complex: acts by stimulating cleavage and RAG protein binding at the 23 bp spacer of conserved recombination signal sequences (RSS). In vitro can displace histone H1 from highly bent DNA. Can restructure the canonical nucleosome leading to relaxation of structural constraints for transcription factor-binding. Enhances binding of sterol regulatory element-binding proteins (SREBPs) such as SREBF1 to their cognate DNA sequences and increases their transcriptional activities. Facilitates binding of TP53 to DNA. May be involved in mitochondrial quality control and autophagy in a transcription-dependent fashion implicating HSPB1. Can modulate the activity of the telomerase complex and may be involved in telomere maintenance. In terms of biological role, in the cytoplasm proposed to dissociate the BECN1:BCL2 complex via competitive interaction with BECN1 leading to autophagy activation. Can protect BECN1 and ATG5 from calpain-mediated cleavage and thus proposed to control their proautophagic and proapoptotic functions and to regulate the extent and severity of inflammation-associated cellular injury. In myeloid cells has a protective role against endotoxemia and bacterial infection by promoting autophagy. Involved in endosomal translocation and activation of TLR9 in response to CpG-DNA in macrophages. In the extracellular compartment (following either active secretion or passive release) involved in regulation of the inflammatory response. Fully reduced HGMB1 (which subsequently gets oxidized after release) in association with CXCL12 mediates the recruitment of inflammatory cells during the initial phase of tissue injury; the CXCL12:HMGB1 complex triggers CXCR4 homodimerization. Induces the migration of monocyte-derived immature dendritic cells and seems to regulate adhesive and migratory functions of neutrophils implicating AGER/RAGE and ITGAM. Can bind to various types of DNA and RNA including microbial unmethylated CpG-DNA to enhance the innate immune response to nucleic acids. Proposed to act in promiscuous DNA/RNA sensing which cooperates with subsequent discriminative sensing by specific pattern recognition receptors. Promotes extracellular DNA-induced AIM2 inflammasome activation implicating AGER/RAGE. Disulfide HMGB1 binds to transmembrane receptors, such as AGER/RAGE, TLR2, TLR4 and probably TREM1, thus activating their signal transduction pathways. Mediates the release of cytokines/chemokines such as TNF, IL-1, IL-6, IL-8, CCL2, CCL3, CCL4 and CXCL10. Promotes secretion of interferon-gamma by macrophage-stimulated natural killer (NK) cells in concert with other cytokines like IL-2 or IL-12. TLR4 is proposed to be the primary receptor promoting macrophage activation and signaling through TLR4 seems to implicate LY96/MD-2. In bacterial LPS- or LTA-mediated inflammatory responses binds to the endotoxins and transfers them to CD14 for signaling to the respective TLR4:LY96 and TLR2 complexes. Contributes to tumor proliferation by association with ACER/RAGE. Can bind to IL1-beta and signals through the IL1R1:IL1RAP receptor complex. Binding to class A CpG activates cytokine production in plasmacytoid dendritic cells implicating TLR9, MYD88 and AGER/RAGE and can activate autoreactive B cells. Via HMGB1-containing chromatin immune complexes may also promote B cell responses to endogenous TLR9 ligands through a B-cell receptor (BCR)-dependent and ACER/RAGE-independent mechanism. Inhibits phagocytosis of apoptotic cells by macrophages; the function is dependent on poly-ADP-ribosylation and involves binding to phosphatidylserine on the cell surface of apoptotic cells. In adaptive immunity may be involved in enhancing immunity through activation of effector T-cells and suppression of regulatory T (TReg) cells. In contrast, without implicating effector or regulatory T-cells, required for tumor infiltration and activation of T-cells expressing the lymphotoxin LTA:LTB heterotrimer thus promoting tumor malignant progression. Also reported to limit proliferation of T-cells. Released HMGB1:nucleosome complexes formed during apoptosis can signal through TLR2 to induce cytokine production. Involved in induction of immunological tolerance by apoptotic cells; its pro-inflammatory activities when released by apoptotic cells are neutralized by reactive oxygen species (ROS)-dependent oxidation specifically on Cys-106. During macrophage activation by activated lymphocyte-derived self apoptotic DNA (ALD-DNA) promotes recruitment of ALD-DNA to endosomes. The protein is High mobility group protein B1 (HMGB1) of Cricetulus griseus (Chinese hamster).